Here is an 876-residue protein sequence, read N- to C-terminus: Alanine--tRNA ligase (876 aa).

H564, H568, C666, and H670 together coordinate Zn(2+).

This sequence belongs to the class-II aminoacyl-tRNA synthetase family. In terms of assembly, homotetramer. Zn(2+) serves as cofactor.

It localises to the cytoplasm. The enzyme catalyses tRNA(Ala) + L-alanine + ATP = L-alanyl-tRNA(Ala) + AMP + diphosphate. Its function is as follows. Catalyzes the attachment of alanine to tRNA(Ala) in a two-step reaction: alanine is first activated by ATP to form Ala-AMP and then transferred to the acceptor end of tRNA(Ala). Also edits incorrectly charged Ser-tRNA(Ala) and Gly-tRNA(Ala) via its editing domain. The sequence is that of Alanine--tRNA ligase from Salmonella typhimurium (strain LT2 / SGSC1412 / ATCC 700720).